A 157-amino-acid chain; its full sequence is 2-C-methyl-D-erythritol 2,4-cyclodiphosphate synthase (157 aa).

A divalent metal cation-binding residues include Asp8 and His10. Residues 8-10 (DVH) and 34-35 (HS) contribute to the 4-CDP-2-C-methyl-D-erythritol 2-phosphate site. Residue His42 coordinates a divalent metal cation. 4-CDP-2-C-methyl-D-erythritol 2-phosphate contacts are provided by residues 56–58 (DIG), 61–65 (FPDTD), 100–106 (AQAPKML), 132–135 (TTTE), Phe139, and Arg142.

The protein belongs to the IspF family. Homotrimer. The cofactor is a divalent metal cation.

It catalyses the reaction 4-CDP-2-C-methyl-D-erythritol 2-phosphate = 2-C-methyl-D-erythritol 2,4-cyclic diphosphate + CMP. It participates in isoprenoid biosynthesis; isopentenyl diphosphate biosynthesis via DXP pathway; isopentenyl diphosphate from 1-deoxy-D-xylulose 5-phosphate: step 4/6. Involved in the biosynthesis of isopentenyl diphosphate (IPP) and dimethylallyl diphosphate (DMAPP), two major building blocks of isoprenoid compounds. Catalyzes the conversion of 4-diphosphocytidyl-2-C-methyl-D-erythritol 2-phosphate (CDP-ME2P) to 2-C-methyl-D-erythritol 2,4-cyclodiphosphate (ME-CPP) with a corresponding release of cytidine 5-monophosphate (CMP). The polypeptide is 2-C-methyl-D-erythritol 2,4-cyclodiphosphate synthase (Erwinia tasmaniensis (strain DSM 17950 / CFBP 7177 / CIP 109463 / NCPPB 4357 / Et1/99)).